A 358-amino-acid polypeptide reads, in one-letter code: Probable dual-specificity RNA methyltransferase RlmN 1 (358 aa).

One can recognise a Radical SAM core domain in the interval 101–326 (MQAGGTLCIS…REKGFYTLLR (226 aa)). Residues C108 and C337 are joined by a disulfide bond. Positions 115, 119, and 122 each coordinate [4Fe-4S] cluster. S-adenosyl-L-methionine is bound by residues 162 to 163 (GE), S194, 218 to 220 (SLN), and N294. The active-site S-methylcysteine intermediate is the C337.

It belongs to the radical SAM superfamily. RlmN family. Requires [4Fe-4S] cluster as cofactor.

It is found in the cytoplasm. It carries out the reaction adenosine(2503) in 23S rRNA + 2 reduced [2Fe-2S]-[ferredoxin] + 2 S-adenosyl-L-methionine = 2-methyladenosine(2503) in 23S rRNA + 5'-deoxyadenosine + L-methionine + 2 oxidized [2Fe-2S]-[ferredoxin] + S-adenosyl-L-homocysteine. The catalysed reaction is adenosine(37) in tRNA + 2 reduced [2Fe-2S]-[ferredoxin] + 2 S-adenosyl-L-methionine = 2-methyladenosine(37) in tRNA + 5'-deoxyadenosine + L-methionine + 2 oxidized [2Fe-2S]-[ferredoxin] + S-adenosyl-L-homocysteine. Its function is as follows. Specifically methylates position 2 of adenine 2503 in 23S rRNA and position 2 of adenine 37 in tRNAs. This is Probable dual-specificity RNA methyltransferase RlmN 1 from Protochlamydia amoebophila (strain UWE25).